The primary structure comprises 550 residues: CCR4-NOT transcription complex subunit 6-like-B (550 aa).

Positions M1–K148 are required for interaction with cnot1, cnot3 and cnot7. LRR repeat units follow at residues H52–L73, N75–V96, S98–F120, and R121–P143. Residues M153–R550 form a nuclease domain region. E235 serves as a coordination point for Mg(2+). Residues E235, E271, H355, and P360 each coordinate substrate. Residue D405 coordinates Mg(2+). The active-site Proton donor/acceptor is D405. Residues N407, N474, and F479 each contribute to the substrate site.

The protein belongs to the CCR4/nocturin family. As to quaternary structure, component of the CCR4-NOT complex. Requires Mg(2+) as cofactor.

It localises to the cytoplasm. Its subcellular location is the nucleus. It carries out the reaction Exonucleolytic cleavage of poly(A) to 5'-AMP.. Its function is as follows. Poly(A) nuclease with 3'-5' RNase activity. Catalytic component of the CCR4-NOT complex which is one of the major cellular mRNA deadenylases and is linked to various cellular processes including bulk mRNA degradation, miRNA-mediated repression, translational repression during translational initiation and general transcription regulation. Additional complex functions may be a consequence of its influence on mRNA expression. The protein is CCR4-NOT transcription complex subunit 6-like-B (cnot6l-b) of Xenopus laevis (African clawed frog).